The following is a 94-amino-acid chain: DNA-directed RNA polymerase subunit omega (94 aa).

The protein belongs to the RNA polymerase subunit omega family. In terms of assembly, the RNAP catalytic core consists of 2 alpha, 1 beta, 1 beta' and 1 omega subunit. When a sigma factor is associated with the core the holoenzyme is formed, which can initiate transcription.

It catalyses the reaction RNA(n) + a ribonucleoside 5'-triphosphate = RNA(n+1) + diphosphate. Functionally, promotes RNA polymerase assembly. Latches the N- and C-terminal regions of the beta' subunit thereby facilitating its interaction with the beta and alpha subunits. The sequence is that of DNA-directed RNA polymerase subunit omega from Photobacterium profundum (strain SS9).